Here is a 201-residue protein sequence, read N- to C-terminus: Lipopolysaccharide core heptose(II)-phosphate phosphatase (201 aa).

Positions 1–35 (MLAFTLRFIKNKRYLATLAGALVIIAGLTSQHAWS) are cleaved as a signal peptide.

The protein belongs to the phosphoglycerate mutase family. Ais subfamily.

It is found in the periplasm. Its pathway is bacterial outer membrane biogenesis; lipopolysaccharide metabolism. In terms of biological role, catalyzes the dephosphorylation of heptose(II) of the outer membrane lipopolysaccharide core. The polypeptide is Lipopolysaccharide core heptose(II)-phosphate phosphatase (Salmonella choleraesuis (strain SC-B67)).